Here is a 100-residue protein sequence, read N- to C-terminus: Aspartyl/glutamyl-tRNA(Asn/Gln) amidotransferase subunit C (100 aa).

It belongs to the GatC family. As to quaternary structure, heterotrimer of A, B and C subunits.

It carries out the reaction L-glutamyl-tRNA(Gln) + L-glutamine + ATP + H2O = L-glutaminyl-tRNA(Gln) + L-glutamate + ADP + phosphate + H(+). The catalysed reaction is L-aspartyl-tRNA(Asn) + L-glutamine + ATP + H2O = L-asparaginyl-tRNA(Asn) + L-glutamate + ADP + phosphate + 2 H(+). Its function is as follows. Allows the formation of correctly charged Asn-tRNA(Asn) or Gln-tRNA(Gln) through the transamidation of misacylated Asp-tRNA(Asn) or Glu-tRNA(Gln) in organisms which lack either or both of asparaginyl-tRNA or glutaminyl-tRNA synthetases. The reaction takes place in the presence of glutamine and ATP through an activated phospho-Asp-tRNA(Asn) or phospho-Glu-tRNA(Gln). The polypeptide is Aspartyl/glutamyl-tRNA(Asn/Gln) amidotransferase subunit C (Rickettsia typhi (strain ATCC VR-144 / Wilmington)).